Reading from the N-terminus, the 426-residue chain is Tyrosine--tRNA ligase (426 aa).

Tyr36 lines the L-tyrosine pocket. Positions 41 to 50 match the 'HIGH' region motif; it reads PTAPSLHVGH. Residues Tyr174 and Gln178 each coordinate L-tyrosine. The 'KMSKS' region motif lies at 234 to 238; it reads KLGKS. Lys237 lines the ATP pocket. In terms of domain architecture, S4 RNA-binding spans 359–416; that stretch reads DGIVDLLVASGLSPSRGAARRTIDEGGVLVNNIRIQSEEWTPRTSDFLHGRWLVLRRG.

This sequence belongs to the class-I aminoacyl-tRNA synthetase family. TyrS type 1 subfamily. As to quaternary structure, homodimer.

Its subcellular location is the cytoplasm. It catalyses the reaction tRNA(Tyr) + L-tyrosine + ATP = L-tyrosyl-tRNA(Tyr) + AMP + diphosphate + H(+). Functionally, catalyzes the attachment of tyrosine to tRNA(Tyr) in a two-step reaction: tyrosine is first activated by ATP to form Tyr-AMP and then transferred to the acceptor end of tRNA(Tyr). The chain is Tyrosine--tRNA ligase from Mycobacterium leprae (strain TN).